We begin with the raw amino-acid sequence, 79 residues long: Protein SIP18 (79 aa).

Positions 1–79 (MSNMMNKFAE…DWKTYENMKK (79 aa)) are disordered. Residues 8–20 (FAEKLQGNDDSHQ) are compositionally biased toward basic and acidic residues.

In Saccharomyces cerevisiae (strain ATCC 204508 / S288c) (Baker's yeast), this protein is Protein SIP18 (SIP18).